Here is a 176-residue protein sequence, read N- to C-terminus: Isopentenyl-diphosphate Delta-isomerase 1 (176 aa).

Residues histidine 23 and histidine 30 each contribute to the Mn(2+) site. The Nudix hydrolase domain maps to 28–162 (HLHRAFSCFI…EEFCTPWFKK (135 aa)). Cysteine 65 is a catalytic residue. Residue cysteine 65 coordinates Mg(2+). Histidine 67 serves as a coordination point for Mn(2+). Glutamate 85 contacts Mg(2+). Glutamate 112 and glutamate 114 together coordinate Mn(2+). The active site involves glutamate 114.

Belongs to the IPP isomerase type 1 family. Homodimer. The cofactor is Mg(2+). Requires Mn(2+) as cofactor.

The protein localises to the cytoplasm. It catalyses the reaction isopentenyl diphosphate = dimethylallyl diphosphate. It participates in isoprenoid biosynthesis; dimethylallyl diphosphate biosynthesis; dimethylallyl diphosphate from isopentenyl diphosphate: step 1/1. Functionally, catalyzes the 1,3-allylic rearrangement of the homoallylic substrate isopentenyl (IPP) to its highly electrophilic allylic isomer, dimethylallyl diphosphate (DMAPP). This is Isopentenyl-diphosphate Delta-isomerase 1 from Photorhabdus laumondii subsp. laumondii (strain DSM 15139 / CIP 105565 / TT01) (Photorhabdus luminescens subsp. laumondii).